We begin with the raw amino-acid sequence, 598 residues long: Fructan 6-exohydrolase (598 aa).

The signal sequence occupies residues 1-30; the sequence is MAARLPLAACVVAFHLCLLLSSLVRSPSTA. Asp65 is a catalytic residue. Asn93, Asn288, and Asn351 each carry an N-linked (GlcNAc...) asparagine glycan. An intrachain disulfide couples Cys451 to Cys497. A glycan (N-linked (GlcNAc...) asparagine) is linked at Asn572.

Belongs to the glycosyl hydrolase 32 family. In terms of tissue distribution, expressed in leaves, stems, roots and inflorescences. Maximum expression is detected in stems, particularly the penultimate internode.

It carries out the reaction Hydrolysis of terminal, non-reducing (2-&gt;6)-linked beta-D-fructofuranose residues in fructans.. Not inhibited by sucrose. Hydrolyzes levan-type beta-(2-&gt;6)-linked fructans to fructose, but not inulin-type beta-(2-&gt;1)-linked fructans. The polypeptide is Fructan 6-exohydrolase (Triticum aestivum (Wheat)).